A 2035-amino-acid chain; its full sequence is Ral GTPase-activating protein subunit alpha-1 (2035 aa).

Disordered stretches follow at residues 343–384 (LVSR…SSLC) and 477–496 (DGEK…VRNS). The span at 345-365 (SREESKNDTVDKVDKSAEPEQ) shows a compositional bias: basic and acidic residues. Composition is skewed to polar residues over residues 366–384 (SHSN…SSLC) and 486–496 (GTSTSEHVRNS). A phosphoserine mark is found at Ser710 and Ser720. Residues 714–752 (SFSRGWSRDQPGQAPMRQRSATTTGSPGTEKARSIVRQK) form a disordered region. Thr753 is modified (phosphothreonine). A Phosphoserine modification is found at Ser772. Thr777 carries the phosphothreonine modification. Position 796 is a phosphoserine (Ser796). The segment covering 807–817 (ERAKVNKEDTS) has biased composition (basic and acidic residues). 2 disordered regions span residues 807–834 (ERAK…SANV) and 848–911 (SGNA…SHSD). Composition is skewed to polar residues over residues 824 to 833 (NSETGGNSAN) and 849 to 862 (GNAS…SSPG). Residues Ser859, Ser860, and Ser863 each carry the phosphoserine modification. Low complexity predominate over residues 894–911 (SPASAGSSDLMSSDSHSD). Phosphoserine occurs at positions 985, 989, 993, and 999. The segment covering 986-1008 (ESASPVHSALGSRSQTPSPSTLS) has biased composition (polar residues). A disordered region spans residues 986-1011 (ESASPVHSALGSRSQTPSPSTLSRAH). The residue at position 1001 (Thr1001) is a Phosphothreonine. Phosphoserine occurs at positions 1003 and 1477. The interval 1326–2035 (FTNKTVAHVA…YHHFPADADH (710 aa)) is minimal domain that binds to TCF3/E12. A coiled-coil region spans residues 1713–1748 (SEKQENDVINAILKQYTEEKEFVEKHFNDLNMKASE). In terms of domain architecture, Rap-GAP spans 1795-2003 (LRNLDSRQCR…EERARYLQTI (209 aa)).

Component of the heterodimeric RalGAP1 complex with RALGAPB. Heterodimerization is required for activity. Interacts with the HLH region of TCF3/isoform E12. Expressed during embryogenesis. Expressed in the adult brain, particularly in neurons of the cortex and hippocampus.

It localises to the cytoplasm. It is found in the nucleus. In terms of biological role, catalytic subunit of the heterodimeric RalGAP1 complex which acts as a GTPase activator for the Ras-like small GTPases RALA and RALB. May interact with the HLH region of TCF3/isoform E12. This Mus musculus (Mouse) protein is Ral GTPase-activating protein subunit alpha-1 (Ralgapa1).